The chain runs to 607 residues: 2-isopropylmalate synthase (607 aa).

Residues 1 to 10 (MASFSESLSQ) are compositionally biased toward polar residues. The segment at 1-40 (MASFSESLSQDPADAYKSAPSITKPMGPPSPGQPQWNPQR) is disordered. Positions 75–349 (PLWCAVDLRD…DPQIDFSNID (275 aa)) constitute a Pyruvate carboxyltransferase domain. D84, H288, H290, and N324 together coordinate Mg(2+). The regulatory domain stretch occupies residues 491–607 (PVQPLERIKQ…VSAVNRAMPR (117 aa)).

The protein belongs to the alpha-IPM synthase/homocitrate synthase family. LeuA type 2 subfamily. In terms of assembly, homodimer. The cofactor is Mg(2+).

Its subcellular location is the cytoplasm. The catalysed reaction is 3-methyl-2-oxobutanoate + acetyl-CoA + H2O = (2S)-2-isopropylmalate + CoA + H(+). It participates in amino-acid biosynthesis; L-leucine biosynthesis; L-leucine from 3-methyl-2-oxobutanoate: step 1/4. In terms of biological role, catalyzes the condensation of the acetyl group of acetyl-CoA with 3-methyl-2-oxobutanoate (2-ketoisovalerate) to form 3-carboxy-3-hydroxy-4-methylpentanoate (2-isopropylmalate). This chain is 2-isopropylmalate synthase, found in Mycobacterium leprae (strain TN).